The following is a 636-amino-acid chain: Chaperone protein DnaK2 (636 aa).

T198 carries the phosphothreonine; by autocatalysis modification. A compositionally biased stretch (low complexity) spans 604-618; the sequence is EAGVGAPGAGPEAGT. The tract at residues 604–636 is disordered; it reads EAGVGAPGAGPEAGTSSGGGDDVIDAEFSEPEK. Positions 625–636 are enriched in acidic residues; sequence DVIDAEFSEPEK.

The protein belongs to the heat shock protein 70 family.

Acts as a chaperone. The chain is Chaperone protein DnaK2 (dnaK2) from Synechocystis sp. (strain ATCC 27184 / PCC 6803 / Kazusa).